The following is a 435-amino-acid chain: Eukaryotic peptide chain release factor subunit 1-3 (435 aa).

Residue alanine 2 is modified to N-acetylalanine.

Belongs to the eukaryotic release factor 1 family. As to quaternary structure, heterodimer of two subunits, one of which binds GTP.

It is found in the cytoplasm. Its function is as follows. Directs the termination of nascent peptide synthesis (translation) in response to the termination codons UAA, UAG and UGA. Modulates plant growth and development. The polypeptide is Eukaryotic peptide chain release factor subunit 1-3 (ERF1-3) (Arabidopsis thaliana (Mouse-ear cress)).